The primary structure comprises 158 residues: NAD(P)H-quinone oxidoreductase subunit J, chloroplastic (158 aa).

This sequence belongs to the complex I 30 kDa subunit family. As to quaternary structure, NDH is composed of at least 16 different subunits, 5 of which are encoded in the nucleus.

It localises to the plastid. The protein localises to the chloroplast thylakoid membrane. It catalyses the reaction a plastoquinone + NADH + (n+1) H(+)(in) = a plastoquinol + NAD(+) + n H(+)(out). The enzyme catalyses a plastoquinone + NADPH + (n+1) H(+)(in) = a plastoquinol + NADP(+) + n H(+)(out). Functionally, NDH shuttles electrons from NAD(P)H:plastoquinone, via FMN and iron-sulfur (Fe-S) centers, to quinones in the photosynthetic chain and possibly in a chloroplast respiratory chain. The immediate electron acceptor for the enzyme in this species is believed to be plastoquinone. Couples the redox reaction to proton translocation, and thus conserves the redox energy in a proton gradient. The sequence is that of NAD(P)H-quinone oxidoreductase subunit J, chloroplastic from Psilotum nudum (Whisk fern).